The primary structure comprises 492 residues: MDPSKFRPSSAYDSPFLTTNAGGPVYNNVSSLTVGPRGPVLLEDYHLIEKLATFDRERIPERVVHARGASAKGFFEVTHDISHLTCADFLRAPGVQTPVIVRFSTVVHERGSPESLRDIRGFAVKFYTREGNFDLVGNNVPVFFNRDAKSFPDTIRALKPNPKSHIQEYWRILDFFSFLPESLHTFAWFFDDVCLPINYRHMEGYGVHAYQLINKAGKAHYVKFHWKPTCGVKCMTEEEAIRVGGTNHSHATKDLYDSIAVGNYPEWKLSIHIMDPEDVERFDFDPLDVTKIWPEDILPLMPVGRLVLNRNIDNFFAENEQLAFNPGHIVPGLYYSEDKLLQTRIFAYADTQRHRIGPNYMQLPVNAPKCAHHNNHRDGAMNFMHRDEEVDYLPSRFDPCRHAEQYPIPSRVLNGRREMCVIEKENNFKQAGERYRSWEPDRQDRYVSKWVEHLSDPRVTYEIRSIWISYLSQADKSCGQKVASRLTLKPTM.

Residues His-65 and Asn-138 contribute to the active site. Tyr-348 contributes to the heme binding site.

Belongs to the catalase family. In terms of assembly, homotetramer. Heme is required as a cofactor.

Its subcellular location is the peroxisome. It catalyses the reaction 2 H2O2 = O2 + 2 H2O. Functionally, occurs in almost all aerobically respiring organisms and serves to protect cells from the toxic effects of hydrogen peroxide. This chain is Catalase isozyme 2 (CAT2), found in Nicotiana plumbaginifolia (Leadwort-leaved tobacco).